The sequence spans 221 residues: Ras-related protein Rab-27A (221 aa).

Serine 2 bears the N-acetylserine mark. The residue at position 2 (serine 2) is a Phosphoserine. 16-24 contacts GTP; that stretch reads GDSGVGKTS. Positions 38–46 match the Effector region motif; sequence FITTVGIDF. GTP is bound by residues 74-78, 133-136, and 163-165; these read DTAGQ, NKSD, and SAA. Residues cysteine 123 and cysteine 188 are joined by a disulfide bond. S-geranylgeranyl cysteine attachment occurs at residues cysteine 219 and cysteine 221. The residue at position 221 (cysteine 221) is a Cysteine methyl ester.

The protein belongs to the small GTPase superfamily. Rab family. Binds SYTL1, SLAC2B, MYRIP, SYTL3, SYTL4 and SYTL5. Interacts with RPH3A and RPH3A. Binds MLPH and SYTL2. Interacts with UNC13D. Does not interact with the BLOC-3 complex (heterodimer of HPS1 and HPS4). Interacts (GDP-bound form preferentially) with DENND10. Found in all the examined tissues except in brain. Low expression was found in thymus, kidney, muscle and placenta. Detected in melanocytes, and in most tumor cell lines examined. Expressed in cytotoxic T-lymphocytes (CTL) and mast cells.

It localises to the membrane. It is found in the melanosome. The protein resides in the late endosome. The protein localises to the lysosome. It catalyses the reaction GTP + H2O = GDP + phosphate + H(+). Regulated by guanine nucleotide exchange factors (GEFs) which promote the exchange of bound GDP for free GTP, GTPase activating proteins (GAPs) which increase the GTP hydrolysis activity, and GDP dissociation inhibitors which inhibit the dissociation of the nucleotide from the GTPase. Activated by GEFs such as DENND10. Functionally, small GTPase which cycles between active GTP-bound and inactive GDP-bound states. In its active state, binds to a variety of effector proteins to regulate homeostasis of late endocytic pathway, including endosomal positioning, maturation and secretion. Plays a role in cytotoxic granule exocytosis in lymphocytes. Required for both granule maturation and granule docking and priming at the immunologic synapse. The protein is Ras-related protein Rab-27A (RAB27A) of Homo sapiens (Human).